We begin with the raw amino-acid sequence, 178 residues long: Thioredoxin F1, chloroplastic (178 aa).

Positions 1–22 (MPLSLRLSPSPTALSPTTGGFG) are disordered. A chloroplast-targeting transit peptide spans 1–57 (MPLSLRLSPSPTALSPTTGGFGPSRKQCRIPYSGVPTTKIGFCSLDSRKRGDSSVVR). Over residues 7-18 (LSPSPTALSPTT) the composition is skewed to polar residues. Residues 58–174 (CSLETVNVSV…LVAAIETARS (117 aa)) form the Thioredoxin domain. Active-site nucleophile residues include Cys-99 and Cys-102. Cys-99 and Cys-102 are disulfide-bonded. Cys-126 bears the S-glutathionyl cysteine; transient mark.

Belongs to the thioredoxin family. Plant F-type subfamily. Glutathionylation at Cys-126 decreases its ability to be reduced by ferredoxin-thioredoxin reductase and reduces its efficiency in activating target chloroplastic enzymes.

The protein localises to the plastid. It is found in the chloroplast stroma. Functionally, thiol-disulfide oxidoreductase involved in the redox regulation of enzymes of both reductive pentose phosphate pathway (Calvin-Benson cycle) and oxidative pentose phosphate pathway. Under light or reducing conditions, activates in chloroplast the glyceraldehyde-3-phosphate dehydrogenase, the phosphoribulokinase and the fructose-1,6-bisphosphate phosphatase, and inhibits the glucose-6-phosphate dehydrogenase. In Arabidopsis thaliana (Mouse-ear cress), this protein is Thioredoxin F1, chloroplastic.